The chain runs to 284 residues: Sulfotransferase 4A1 (284 aa).

A phosphothreonine mark is found at T8, T11, and T205.

This sequence belongs to the sulfotransferase 1 family. Expressed in brain, cerebellum and hypothalamus. Not detected in pancreas, liver, lung, intestine, kidney, uterus, adrenal gland, thymus, spleen, epididymis, testicle, and heart.

The protein resides in the cytoplasm. Atypical sulfotransferase family member with very low affinity for 3'-phospho-5'-adenylyl sulfate (PAPS) and very low catalytic activity towards L-triiodothyronine, thyroxine, estrone, p-nitrophenol, 2-naphthylamine, and 2-beta-naphthol. May have a role in the metabolism of drugs and neurotransmitters in the CNS. In Mus musculus (Mouse), this protein is Sulfotransferase 4A1 (Sult4a1).